The chain runs to 450 residues: 3-phosphoshikimate 1-carboxyvinyltransferase (450 aa).

The segment at 1-26 (MSGHGTPIPMTSRRASPLKGEAHVPG) is disordered. Lys28, Ser29, and Arg33 together coordinate 3-phosphoshikimate. Residue Lys28 coordinates phosphoenolpyruvate. Gly101 and Arg129 together coordinate phosphoenolpyruvate. Ser174, Gln176, Asp327, and Lys354 together coordinate 3-phosphoshikimate. Residue Gln176 participates in phosphoenolpyruvate binding. Asp327 serves as the catalytic Proton acceptor. Arg358 and Arg403 together coordinate phosphoenolpyruvate.

It belongs to the EPSP synthase family. In terms of assembly, monomer.

It is found in the cytoplasm. It catalyses the reaction 3-phosphoshikimate + phosphoenolpyruvate = 5-O-(1-carboxyvinyl)-3-phosphoshikimate + phosphate. The protein operates within metabolic intermediate biosynthesis; chorismate biosynthesis; chorismate from D-erythrose 4-phosphate and phosphoenolpyruvate: step 6/7. In terms of biological role, catalyzes the transfer of the enolpyruvyl moiety of phosphoenolpyruvate (PEP) to the 5-hydroxyl of shikimate-3-phosphate (S3P) to produce enolpyruvyl shikimate-3-phosphate and inorganic phosphate. The sequence is that of 3-phosphoshikimate 1-carboxyvinyltransferase from Ruegeria sp. (strain TM1040) (Silicibacter sp.).